The primary structure comprises 152 residues: Lipoprotein signal peptidase (152 aa).

The next 2 membrane-spanning stretches (helical) occupy residues 55-75 and 85-105; these read NKMWFFYIITVVFVVFIVFYM and LGISLGLILGGAMGNFIDRVF. Active-site residues include Asp-111 and Asp-129. A helical membrane pass occupies residues 124–144; sequence VFNIADSALCIGVVLIIIQTL.

Belongs to the peptidase A8 family.

The protein resides in the cell membrane. It carries out the reaction Release of signal peptides from bacterial membrane prolipoproteins. Hydrolyzes -Xaa-Yaa-Zaa-|-(S,diacylglyceryl)Cys-, in which Xaa is hydrophobic (preferably Leu), and Yaa (Ala or Ser) and Zaa (Gly or Ala) have small, neutral side chains.. The protein operates within protein modification; lipoprotein biosynthesis (signal peptide cleavage). In terms of biological role, this protein specifically catalyzes the removal of signal peptides from prolipoproteins. This is Lipoprotein signal peptidase from Bacillus cereus (strain B4264).